The chain runs to 113 residues: uncharacterized protein (113 aa).

Disordered regions lie at residues 1-22 (MGEH…PLAQ) and 90-113 (DGRH…SDDL). Residues 90–99 (DGRHTTESSF) are compositionally biased toward basic and acidic residues. Low complexity predominate over residues 100 to 113 (EHSSPSRSPQSDDL).

This is an uncharacterized protein from Mycobacterium tuberculosis (strain CDC 1551 / Oshkosh).